Reading from the N-terminus, the 228-residue chain is Sodium channel regulatory subunit beta-4 (228 aa).

A signal peptide spans 1-30; that stretch reads MPGARDQGAARARWLGIGLLGLFLLPVSLS. Positions 31 to 148 constitute an Ig-like C2-type domain; sequence LEVSVGKATT…NDFQHQATIF (118 aa). Over 31-162 the chain is Extracellular; the sequence is LEVSVGKATT…DKLEEVDNTV (132 aa). Asn45, Asn71, and Asn113 each carry an N-linked (GlcNAc...) asparagine glycan. A disulfide bridge connects residues Cys53 and Cys131. Residues 163-183 traverse the membrane as a helical segment; sequence TLIILGVVGGVIGLLIFILLV. At 184–228 the chain is on the cytoplasmic side; sequence KKFIAFIIKKTQEKKKECLVSSSGNDNTENGLPGSKAEEKAPTKV. A disordered region spans residues 198–228; it reads KKECLVSSSGNDNTENGLPGSKAEEKAPTKV. Positions 203–213 are enriched in polar residues; the sequence is VSSSGNDNTEN. The segment covering 219-228 has biased composition (basic and acidic residues); it reads KAEEKAPTKV.

Belongs to the sodium channel auxiliary subunit SCN4B (TC 8.A.17) family. In terms of assembly, a voltage-gated sodium (Nav) channel consists of an ion-conducting pore-forming alpha subunit functional on its own that is regulated by one or more beta subunits. The beta subunit SCN4B is disulfide-linked to the pore-forming alpha subunit. Interacts with SCN1A; regulatory subunit of SCN1A/Nav1.1. Interacts with SCN2A; regulatory subunit of SCN2A/Nav1.2. Post-translationally, contains an interchain disulfide bond with SCN2A.

It localises to the cell membrane. In terms of biological role, regulatory subunit of multiple voltage-gated sodium (Nav) channels directly mediating the depolarization of excitable membranes. Navs, also called VGSCs (voltage-gated sodium channels) or VDSCs (voltage-dependent sodium channels), operate by switching between closed and open conformations depending on the voltage difference across the membrane. In the open conformation they allow Na(+) ions to selectively pass through the pore, along their electrochemical gradient. The influx of Na+ ions provokes membrane depolarization, initiating the propagation of electrical signals throughout cells and tissues. The accessory beta subunits participate in localization and functional modulation of the Nav channels. Modulates the activity of SCN1A/Nav1.1. Modulates the activity of SCN2A/Nav1.2. The sequence is that of Sodium channel regulatory subunit beta-4 from Bos taurus (Bovine).